Here is a 501-residue protein sequence, read N- to C-terminus: Cytochrome P450 monooxygeanse terP (501 aa).

A helical transmembrane segment spans residues 2 to 22 (PSLLLSLLLLQVPIICAWLLV). A heme-binding site is contributed by Cys441.

Belongs to the cytochrome P450 family. It depends on heme as a cofactor.

Its subcellular location is the membrane. The protein operates within secondary metabolite biosynthesis. Cytochrome P450 monooxygeanse; part of the gene cluster that mediates the biosynthesis of terpendoles, indole-diterpene (IDT) mycotoxins including terpendole I, terpendole K, terpendole C, as well as the kinesin Eg5 inhibitor terpendole E. TerP has dual activity and is able to convert terpendole E to 13-desoxyterpendole I and paspaline to 13-desoxypaxilline. Terpendoles biosynthesis begins with the synthesis of geranylgeranyl diphosphate (GGPP) by a yet unidentified GGPP synthase. Condensation of indole-3-glycerol phosphate with GGPP by the prenyltransferase terC then forms 3-geranylgeranylindole (3-GGI), followed by epoxidation and cyclization of this intermediate (by the FAD-dependent monooxygeanse terM and the terpene cyclase terB) to form paspaline. The cytochrome monooxygenase terQ then hydroxylates paspalline at C-11 to yield terpendole E. The cytochrome monooxygenase terP converts terpendole E to 13-desoxyterpendole I, and terQ converts 13-desoxyterpendole I into terpendole I. TerF and terK are required for conversion of terpendole I to terpendole C which is further converted to terpendole K. This chain is Cytochrome P450 monooxygeanse terP, found in Tolypocladium album (Soil fungus).